Consider the following 156-residue polypeptide: 6,7-dimethyl-8-ribityllumazine synthase (156 aa).

5-amino-6-(D-ribitylamino)uracil contacts are provided by residues phenylalanine 23, 57–59 (AFE), and 81–83 (AVI). A (2S)-2-hydroxy-3-oxobutyl phosphate-binding site is contributed by 86–87 (ST). Histidine 89 (proton donor) is an active-site residue. A 5-amino-6-(D-ribitylamino)uracil-binding site is contributed by phenylalanine 114. Arginine 128 provides a ligand contact to (2S)-2-hydroxy-3-oxobutyl phosphate.

This sequence belongs to the DMRL synthase family.

It catalyses the reaction (2S)-2-hydroxy-3-oxobutyl phosphate + 5-amino-6-(D-ribitylamino)uracil = 6,7-dimethyl-8-(1-D-ribityl)lumazine + phosphate + 2 H2O + H(+). The protein operates within cofactor biosynthesis; riboflavin biosynthesis; riboflavin from 2-hydroxy-3-oxobutyl phosphate and 5-amino-6-(D-ribitylamino)uracil: step 1/2. Its function is as follows. Catalyzes the formation of 6,7-dimethyl-8-ribityllumazine by condensation of 5-amino-6-(D-ribitylamino)uracil with 3,4-dihydroxy-2-butanone 4-phosphate. This is the penultimate step in the biosynthesis of riboflavin. This Campylobacter fetus subsp. fetus (strain 82-40) protein is 6,7-dimethyl-8-ribityllumazine synthase.